Consider the following 93-residue polypeptide: Phosphoribosyl-ATP pyrophosphatase (93 aa).

The protein belongs to the PRA-PH family.

It localises to the cytoplasm. It catalyses the reaction 1-(5-phospho-beta-D-ribosyl)-ATP + H2O = 1-(5-phospho-beta-D-ribosyl)-5'-AMP + diphosphate + H(+). It functions in the pathway amino-acid biosynthesis; L-histidine biosynthesis; L-histidine from 5-phospho-alpha-D-ribose 1-diphosphate: step 2/9. The chain is Phosphoribosyl-ATP pyrophosphatase from Metallosphaera sedula (strain ATCC 51363 / DSM 5348 / JCM 9185 / NBRC 15509 / TH2).